The primary structure comprises 218 residues: Probable 3-keto-L-gulonate-6-phosphate decarboxylase (218 aa).

Residue D11 participates in substrate binding. E33 and D62 together coordinate Mg(2+). Residue R194 coordinates substrate.

It belongs to the HPS/KGPDC family. KGPDC subfamily. Mg(2+) serves as cofactor.

It catalyses the reaction 3-dehydro-L-gulonate 6-phosphate + H(+) = L-xylulose 5-phosphate + CO2. It functions in the pathway cofactor degradation; L-ascorbate degradation; D-xylulose 5-phosphate from L-ascorbate: step 2/4. In terms of biological role, catalyzes the decarboxylation of 3-keto-L-gulonate-6-P into L-xylulose-5-P. Is involved in the anaerobic L-ascorbate utilization. This Mycoplasma pneumoniae (strain ATCC 29342 / M129 / Subtype 1) (Mycoplasmoides pneumoniae) protein is Probable 3-keto-L-gulonate-6-phosphate decarboxylase (ulaD).